Reading from the N-terminus, the 209-residue chain is Fibroblast growth factor 10 (209 aa).

Residues 1-36 (MWKWILTHCASAFPHLPGCCCCFLLLFLVSSFPVTC) form the signal peptide. N-linked (GlcNAc...) asparagine glycans are attached at residues N50 and N197.

The protein belongs to the heparin-binding growth factors family. In terms of assembly, interacts with FGFR1 and FGFR2. Interacts with FGFBP1. In terms of tissue distribution, expressed abundantly in embryos and the lung, and at much lower levels in brain and heart.

It is found in the secreted. Functionally, plays an important role in the regulation of embryonic development, cell proliferation and cell differentiation. Required for normal branching morphogenesis. May play a role in wound healing. The polypeptide is Fibroblast growth factor 10 (Fgf10) (Mus musculus (Mouse)).